Here is a 447-residue protein sequence, read N- to C-terminus: Probable glycine dehydrogenase (decarboxylating) subunit 1 (447 aa).

This sequence belongs to the GcvP family. N-terminal subunit subfamily. The glycine cleavage system is composed of four proteins: P, T, L and H. In this organism, the P 'protein' is a heterodimer of two subunits.

The enzyme catalyses N(6)-[(R)-lipoyl]-L-lysyl-[glycine-cleavage complex H protein] + glycine + H(+) = N(6)-[(R)-S(8)-aminomethyldihydrolipoyl]-L-lysyl-[glycine-cleavage complex H protein] + CO2. The glycine cleavage system catalyzes the degradation of glycine. The P protein binds the alpha-amino group of glycine through its pyridoxal phosphate cofactor; CO(2) is released and the remaining methylamine moiety is then transferred to the lipoamide cofactor of the H protein. This chain is Probable glycine dehydrogenase (decarboxylating) subunit 1, found in Beijerinckia indica subsp. indica (strain ATCC 9039 / DSM 1715 / NCIMB 8712).